The sequence spans 632 residues: MAU2 chromatid cohesion factor homolog (632 aa).

TPR repeat units lie at residues 453-486 (GGFYYVQGLHAFHKNSFHEAKRFLRETLKMANAE) and 493-526 (SCSLVLLSHVFLSIGNSKESMNMVTPAMQLASKI).

Belongs to the SCC4/mau-2 family. In terms of assembly, interacts with Nipped-B to form the cohesin loading complex.

It localises to the nucleus. The protein localises to the nucleoplasm. Functionally, required for association of the cohesin complex with chromatin during interphase. Plays a role in sister chromatid cohesion and normal progression through prometaphase. The chain is MAU2 chromatid cohesion factor homolog from Drosophila simulans (Fruit fly).